Consider the following 375-residue polypeptide: Glutamate 5-kinase (375 aa).

Residue K3 participates in ATP binding. Substrate is bound by residues S44, D131, and N143. Residues 163 to 164 (SD) and 205 to 211 (TGGMVTK) contribute to the ATP site. A PUA domain is found at 269–346 (EGTLWVDDGA…GDIEALLGYR (78 aa)).

This sequence belongs to the glutamate 5-kinase family.

It localises to the cytoplasm. The enzyme catalyses L-glutamate + ATP = L-glutamyl 5-phosphate + ADP. It functions in the pathway amino-acid biosynthesis; L-proline biosynthesis; L-glutamate 5-semialdehyde from L-glutamate: step 1/2. Catalyzes the transfer of a phosphate group to glutamate to form L-glutamate 5-phosphate. This is Glutamate 5-kinase from Rhodospirillum rubrum (strain ATCC 11170 / ATH 1.1.1 / DSM 467 / LMG 4362 / NCIMB 8255 / S1).